The primary structure comprises 180 residues: Ribosome maturation factor RimM (180 aa).

The PRC barrel domain maps to 104 to 177 (PEEFHDHQLV…RVVVDPPGGL (74 aa)).

The protein belongs to the RimM family. As to quaternary structure, binds ribosomal protein uS19.

The protein resides in the cytoplasm. Functionally, an accessory protein needed during the final step in the assembly of 30S ribosomal subunit, possibly for assembly of the head region. Essential for efficient processing of 16S rRNA. May be needed both before and after RbfA during the maturation of 16S rRNA. It has affinity for free ribosomal 30S subunits but not for 70S ribosomes. The sequence is that of Ribosome maturation factor RimM from Salinispora tropica (strain ATCC BAA-916 / DSM 44818 / JCM 13857 / NBRC 105044 / CNB-440).